Reading from the N-terminus, the 63-residue chain is MNAQYATCYLCDELVYLFKKQFARTSASAAALYRKRMAIVRRGVVLCQRCSSALHGGDDPDRR.

This is an uncharacterized protein from Orgyia pseudotsugata (Douglas-fir tussock moth).